Reading from the N-terminus, the 955-residue chain is 2-oxoglutarate dehydrogenase E1 component (955 aa).

Belongs to the alpha-ketoglutarate dehydrogenase family. Homodimer. Part of the 2-oxoglutarate dehydrogenase (OGDH) complex composed of E1 (2-oxoglutarate dehydrogenase), E2 (dihydrolipoamide succinyltransferase) and E3 (dihydrolipoamide dehydrogenase); the complex contains multiple copies of the three enzymatic components (E1, E2 and E3). Thiamine diphosphate is required as a cofactor.

The catalysed reaction is N(6)-[(R)-lipoyl]-L-lysyl-[protein] + 2-oxoglutarate + H(+) = N(6)-[(R)-S(8)-succinyldihydrolipoyl]-L-lysyl-[protein] + CO2. E1 component of the 2-oxoglutarate dehydrogenase (OGDH) complex which catalyzes the decarboxylation of 2-oxoglutarate, the first step in the conversion of 2-oxoglutarate to succinyl-CoA and CO(2). The sequence is that of 2-oxoglutarate dehydrogenase E1 component from Bacillus cereus (strain ATCC 14579 / DSM 31 / CCUG 7414 / JCM 2152 / NBRC 15305 / NCIMB 9373 / NCTC 2599 / NRRL B-3711).